The sequence spans 278 residues: HTH-type transcriptional regulator ExsA (278 aa).

In terms of domain architecture, HTH araC/xylS-type spans Glu-171–Gly-269. 2 DNA-binding regions (H-T-H motif) span residues Ser-188–Tyr-209 and Ile-236–Phe-259.

Homodimer. Interacts with ExsD; this interaction inhibits ExsA activity.

Its activity is regulated as follows. In the absence of inducing signals such as low Ca(2+) or host cell contact, the T3SS/injectisome is expressed at a low basal level and exists in a quiescent state due to ExsA sequestration by ExsD in a 1:1 complex. Upon host cell contact, this interaction is disrupted by the anti-antiactivator protein ExsC leading to ExsA activation. Functionally, transcriptional regulator that plays an essential role in the activation the type III secretion system (T3SS) operons. In addition, ExsA directly regulates the transcription of ImpA virulence factor that cooperatively inhibits the functions of host macrophages together with the T3SS. The chain is HTH-type transcriptional regulator ExsA (exsA) from Pseudomonas aeruginosa (strain ATCC 15692 / DSM 22644 / CIP 104116 / JCM 14847 / LMG 12228 / 1C / PRS 101 / PAO1).